Reading from the N-terminus, the 609-residue chain is Ovochymase-2 (609 aa).

Positions 1-22 are cleaved as a signal peptide; the sequence is MPISKDKLILILGMVCLEQGHS. Residues 23 to 51 constitute a propeptide, activation peptide; the sequence is ETLSSIRNPDCGQSLVKPQPQNYFSLFSR. The Peptidase S1 domain occupies 52–299; it reads IVGGSQVEKG…VLPWILKHIQ (248 aa). A disulfide bridge links C77 with C93. H92 acts as the Charge relay system in catalysis. N104 carries N-linked (GlcNAc...) asparagine glycosylation. A Ca(2+)-binding site is contributed by E119. The Charge relay system role is filled by D142. 4 disulfide bridges follow: C176–C246, C207–C225, C236–C265, and C311–C341. The Charge relay system role is filled by S240. CUB domains lie at 311-421 and 431-543; these read CSEP…YKAL and CRSL…ISFI. A glycan (N-linked (GlcNAc...) asparagine) is linked at N356. A disulfide bond links C365 and C384. A glycan (N-linked (GlcNAc...) asparagine) is linked at N415. Disulfide bonds link C431/C458 and C485/C506. N-linked (GlcNAc...) asparagine glycans are attached at residues N530 and N549. Residues 580 to 609 are disordered; it reads HTKPPYEEDIGEMPAIDSGLLKQGERRGKH.

It belongs to the peptidase S1 family. Only expressed in uterus tissue. Expressed in the initial segment (IS) of the caput epididymis, the region most proximal to the testis.

The protein localises to the secreted. Functionally, may be required for sperm ADAM3 processing and consequential sperm fertilizing ability. In vitro, has an endopeptidase activity. The protein is Ovochymase-2 of Mus musculus (Mouse).